The sequence spans 327 residues: tRNA dimethylallyltransferase (327 aa).

ATP is bound at residue 14–21; sequence GPTASGKT. A substrate-binding site is contributed by 16-21; that stretch reads TASGKT. Interaction with substrate tRNA stretches follow at residues 39-42 and 163-167; these read DSAL and QRIQR.

This sequence belongs to the IPP transferase family. As to quaternary structure, monomer. The cofactor is Mg(2+).

The enzyme catalyses adenosine(37) in tRNA + dimethylallyl diphosphate = N(6)-dimethylallyladenosine(37) in tRNA + diphosphate. Its function is as follows. Catalyzes the transfer of a dimethylallyl group onto the adenine at position 37 in tRNAs that read codons beginning with uridine, leading to the formation of N6-(dimethylallyl)adenosine (i(6)A). This chain is tRNA dimethylallyltransferase, found in Xanthomonas oryzae pv. oryzae (strain MAFF 311018).